A 409-amino-acid polypeptide reads, in one-letter code: Bone morphogenetic protein 4 (409 aa).

The first 19 residues, 1–19, serve as a signal peptide directing secretion; the sequence is MIPGNRMLMVVLLCQVLLG. The propeptide occupies 20–293; sequence GASHASLIPE…ALTRRRRAKR (274 aa). Ser91 is modified (phosphoserine). The interval 91 to 110 is disordered; sequence SGEEEEEEQMPSGGLEYPER. N-linked (GlcNAc...) asparagine glycosylation is found at Asn144, Asn209, Asn351, and Asn366. 3 disulfide bridges follow: Cys309–Cys374, Cys338–Cys406, and Cys342–Cys408.

This sequence belongs to the TGF-beta family. As to quaternary structure, homodimer; disulfide-linked. Interacts with GREM2. Part of a complex consisting of TWSG1 and CHRD. Interacts with the serine proteases, HTRA1 and HTRA3; the interaction with either inhibits BMP4-mediated signaling. The HTRA protease activity is required for this inhibition. Interacts with SOSTDC1. Interacts with FBN1 (via N-terminal domain) and FBN2. Interacts with type I receptor BMPR1A. Interacts with type II receptor BMPR2. Interacts with FSTL1; this interaction inhibits the activation of the BMP4/Smad1/5/8 signaling pathway. Interacts with SCUBE3. Interacts with TGFBR3.

The protein localises to the secreted. The protein resides in the extracellular space. Its subcellular location is the extracellular matrix. Growth factor of the TGF-beta superfamily that plays essential roles in many developmental processes, including neurogenesis, vascular development, angiogenesis and osteogenesis. Acts in concert with PTHLH/PTHRP to stimulate ductal outgrowth during embryonic mammary development and to inhibit hair follicle induction. Initiates the canonical BMP signaling cascade by associating with type I receptor BMPR1A and type II receptor BMPR2. Once all three components are bound together in a complex at the cell surface, BMPR2 phosphorylates and activates BMPR1A. In turn, BMPR1A propagates signal by phosphorylating SMAD1/5/8 that travel to the nucleus and act as activators and repressors of transcription of target genes. Positively regulates the expression of odontogenic development regulator MSX1 via inducing the IPO7-mediated import of SMAD1 to the nucleus. Required for MSX1-mediated mesenchymal molar tooth bud development beyond the bud stage, via promoting Wnt signaling. Acts as a positive regulator of odontoblast differentiation during mesenchymal tooth germ formation, expression is repressed during the bell stage by MSX1-mediated inhibition of CTNNB1 signaling. Able to induce its own expression in dental mesenchymal cells and also in the neighboring dental epithelial cells via an MSX1-mediated pathway. Can also signal through non-canonical BMP pathways such as ERK/MAP kinase, PI3K/Akt, or SRC cascades. For example, induces SRC phosphorylation which, in turn, activates VEGFR2, leading to an angiogenic response. This chain is Bone morphogenetic protein 4 (BMP4), found in Oryctolagus cuniculus (Rabbit).